A 546-amino-acid polypeptide reads, in one-letter code: Membrane protein insertase YidC (546 aa).

The helical transmembrane segment at 6-26 threads the bilayer; it reads NLLLIALLFVSFMIWQAWQVD. The segment covering 30-44 has biased composition (low complexity); that stretch reads QPTAQTTQQTTNTAT. The tract at residues 30-55 is disordered; sequence QPTAQTTQQTTNTATGDKASQAVPGS. The next 4 membrane-spanning stretches (helical) occupy residues 344–364, 419–439, 457–477, and 498–518; these read KFIHSFVGNWGFSIIVITFIV, LGGCLPLIIQMPIFLALYYML, LSAQDPYYILPILMGITMYFI, and PVIFTVFFLWFPAGLVLYYIV.

This sequence belongs to the OXA1/ALB3/YidC family. Type 1 subfamily. As to quaternary structure, interacts with the Sec translocase complex via SecD. Specifically interacts with transmembrane segments of nascent integral membrane proteins during membrane integration.

The protein localises to the cell inner membrane. Required for the insertion and/or proper folding and/or complex formation of integral membrane proteins into the membrane. Involved in integration of membrane proteins that insert both dependently and independently of the Sec translocase complex, as well as at least some lipoproteins. Aids folding of multispanning membrane proteins. This Yersinia pestis protein is Membrane protein insertase YidC.